A 360-amino-acid polypeptide reads, in one-letter code: Histidinol-phosphate aminotransferase (360 aa).

N6-(pyridoxal phosphate)lysine is present on Lys222.

It belongs to the class-II pyridoxal-phosphate-dependent aminotransferase family. Histidinol-phosphate aminotransferase subfamily. In terms of assembly, homodimer. Pyridoxal 5'-phosphate is required as a cofactor.

The catalysed reaction is L-histidinol phosphate + 2-oxoglutarate = 3-(imidazol-4-yl)-2-oxopropyl phosphate + L-glutamate. It participates in amino-acid biosynthesis; L-histidine biosynthesis; L-histidine from 5-phospho-alpha-D-ribose 1-diphosphate: step 7/9. The sequence is that of Histidinol-phosphate aminotransferase from Listeria innocua serovar 6a (strain ATCC BAA-680 / CLIP 11262).